We begin with the raw amino-acid sequence, 640 residues long: Biosynthetic arginine decarboxylase (640 aa).

At K105 the chain carries N6-(pyridoxal phosphate)lysine. Position 290–300 (290–300 (FDVGGGLAVDY)) interacts with substrate.

This sequence belongs to the Orn/Lys/Arg decarboxylase class-II family. SpeA subfamily. Mg(2+) serves as cofactor. Pyridoxal 5'-phosphate is required as a cofactor.

The enzyme catalyses L-arginine + H(+) = agmatine + CO2. Its function is as follows. Catalyzes the biosynthesis of agmatine from arginine. The protein is Biosynthetic arginine decarboxylase of Vibrio cholerae serotype O1 (strain ATCC 39315 / El Tor Inaba N16961).